We begin with the raw amino-acid sequence, 182 residues long: Aralkylamine dehydrogenase light chain (182 aa).

Residues 1–47 (MRWLDKFGESLSRSVAHKTSRRSVLRSVGKLMVGSAFVLPVLPVARA) constitute a signal peptide (tat-type signal). Intrachain disulfides connect Cys-75/Cys-140, Cys-81/Cys-113, Cys-88/Cys-171, Cys-90/Cys-138, Cys-91/Cys-135, Cys-98/Cys-129, and Cys-130/Cys-161. A substrate-binding site is contributed by Asp-84. Catalysis depends on Trp-109, which acts as the Tryptophylquinone 6'-substrate hemiaminal intermediate. Trp-109 is modified (tryptophylquinone). The tryptophan tryptophylquinone (Trp-Trp) cross-link spans 109–160 (WIGTCHNPHDGKDYLISYHDCCGKTACGRCQCNTQTRERPGYEFFLHNDVNW). Asp-128 functions as the Proton acceptor in the catalytic mechanism. 156 to 158 (NDV) provides a ligand contact to substrate.

The protein belongs to the aromatic amine dehydrogenase light chain family. As to quaternary structure, heterotetramer of two light and two heavy chains. Binds two azurin molecules per heterotetramer. Tryptophan tryptophylquinone residue is required as a cofactor. Post-translationally, tryptophan tryptophylquinone (TTQ) is formed by oxidation of the indole ring of a tryptophan to form tryptophylquinone followed by covalent cross-linking with another tryptophan residue. In terms of processing, predicted to be exported by the Tat system. The position of the signal peptide cleavage has been experimentally proven.

Its subcellular location is the periplasm. It carries out the reaction an aralkylamine + 2 oxidized [azurin] + H2O = an aromatic aldehyde + 2 reduced [azurin] + NH4(+) + 2 H(+). Its activity is regulated as follows. Irreversibly inhibited by phenylhydrazine, hydroxylamine, semicarbazide, hydrazine and aminoguanidine. Reversibly inhibited by isonicotinic acid hydrazide (isoniazid) and isonicotinic acid 2-isopropyl hydrazide (iproniazid). Oxidizes primary aromatic amines and, more slowly, some long-chain aliphatic amines, but not methylamine or ethylamine. Uses azurin as an electron acceptor to transfer electrons from the reduced tryptophylquinone cofactor. The chain is Aralkylamine dehydrogenase light chain from Alcaligenes faecalis.